The primary structure comprises 128 residues: Iron-sulfur cluster insertion protein ErpA (128 aa).

Iron-sulfur cluster-binding residues include Cys-56, Cys-120, and Cys-122.

It belongs to the HesB/IscA family. In terms of assembly, homodimer. Iron-sulfur cluster serves as cofactor.

Its function is as follows. Required for insertion of 4Fe-4S clusters for at least IspG. The sequence is that of Iron-sulfur cluster insertion protein ErpA from Xanthomonas euvesicatoria pv. vesicatoria (strain 85-10) (Xanthomonas campestris pv. vesicatoria).